The primary structure comprises 1170 residues: Short transient receptor potential channel 2 (1170 aa).

At 1–627 (MLMSLTDSKE…GWRGSTTIWK (627 aa)) the chain is on the cytoplasmic side. Disordered regions lie at residues 64-113 (SLSD…QTST), 142-231 (AHKA…QATG), and 322-342 (ESGS…VEES). Residues 74 to 85 (SPGSSGLNQNSS) show a composition bias toward polar residues. A compositionally biased stretch (basic and acidic residues) spans 158 to 177 (GEPDSSHPERAEPRAEEPNR). ANK repeat units follow at residues 300–329 (KFPP…DPSG), 346–376 (SWRE…DFRQ), 377–405 (IHEA…REKG), and 429–458 (PGVT…TIAR). The helical transmembrane segment at 628–648 (LFVAFLIFLTMPFLCIGYWLA) threads the bilayer. Topologically, residues 649–658 (PKSRLGRLLK) are extracellular. Residues 659–679 (IPVLKFLLHSASYLWFLIFLL) form a helical membrane-spanning segment. Over 680–701 (GESLVMETQLSTFKGRSQSVWE) the chain is Cytoplasmic. Residues 702-722 (TSLHMIWVTGFLWFECKEVWI) traverse the membrane as a helical segment. Residues 723 to 737 (EGLRSYLLDWWNFLD) lie on the Extracellular side of the membrane. Residues 738 to 758 (VVILSLYLASFALRLLLAGLA) form a helical membrane-spanning segment. Residues 759–788 (YMHCRDASDSSTCRYFTTAERSEWRTEDPQ) lie on the Cytoplasmic side of the membrane. A helical membrane pass occupies residues 789-809 (FLAEVLFAVTSMLSFTRLAYI). The Extracellular segment spans residues 810-832 (LPAHESLGTLQISIGKMIDDMIR). Residues 833-853 (FMFILMIILTAFLCGLNNIYV) traverse the membrane as a helical segment. Residues 854–898 (PYQETEKLGNFNETFQFLFWTMFGMEEHSVVDMPQFLVPEFVGRA) lie on the Cytoplasmic side of the membrane. A helical transmembrane segment spans residues 899-919 (MYGIFTIVMVIVLLNMLIAMI). Topologically, residues 920-1170 (TNSFQKIEDD…GEDLETKGES (251 aa)) are extracellular. Residues 1030 to 1068 (RREFEETRRKDLGNRLTELTKTVSRLQSEVASVQKTVAA) are a coiled coil. Residues 1118–1170 (LEDSLDATGEAGTPASGESSSSSSAHVLVHREQEAEGAGDLPLGEDLETKGES) are disordered.

This sequence belongs to the transient receptor (TC 1.A.4) family. STrpC subfamily. TRPC2 sub-subfamily. In terms of tissue distribution, expressed exclusively in vomeronasal organ neurons (sensory microvilli).

It is found in the membrane. Functionally, thought to form a receptor-activated calcium permeant cation channel. Probably is operated by a phosphatidylinositol second messenger system activated by receptor tyrosine kinases or G-protein coupled receptors. Is not activated by intracellular calcium store depletion. This Rattus norvegicus (Rat) protein is Short transient receptor potential channel 2 (Trpc2).